The primary structure comprises 369 residues: S-(hydroxymethyl)glutathione dehydrogenase (369 aa).

Zn(2+) is bound by residues Cys40, His62, Cys92, Cys95, Cys98, Cys106, and Cys169.

Belongs to the zinc-containing alcohol dehydrogenase family. Class-III subfamily. Homodimer. Zn(2+) serves as cofactor.

The protein resides in the cytoplasm. It carries out the reaction S-(hydroxymethyl)glutathione + NADP(+) = S-formylglutathione + NADPH + H(+). The catalysed reaction is S-(hydroxymethyl)glutathione + NAD(+) = S-formylglutathione + NADH + H(+). The enzyme catalyses a primary alcohol + NAD(+) = an aldehyde + NADH + H(+). It catalyses the reaction a secondary alcohol + NAD(+) = a ketone + NADH + H(+). It carries out the reaction S-nitrosoglutathione + NADH + H(+) = S-(hydroxysulfenamide)glutathione + NAD(+). In terms of biological role, has high formaldehyde dehydrogenase activity in the presence of glutathione and catalyzes the oxidation of normal alcohols in a reaction that is not GSH-dependent. In addition, hemithiolacetals other than those formed from GSH, including omega-thiol fatty acids, also are substrates. Also acts as a S-nitroso-glutathione reductase by catalyzing the NADH-dependent reduction of S-nitrosoglutathione. The polypeptide is S-(hydroxymethyl)glutathione dehydrogenase (frmA) (Escherichia coli O1:K1 / APEC).